Reading from the N-terminus, the 252-residue chain is 2,5-diamino-6-ribosylamino-4(3H)-pyrimidinone 5'-phosphate reductase (252 aa).

NADP(+) contacts are provided by residues T80, D84, V166, and G189 to I193.

This sequence belongs to the HTP reductase family. In terms of assembly, homodimer.

It carries out the reaction 2,5-diamino-6-(1-D-ribitylamino)pyrimidin-4(3H)-one 5'-phosphate + NADP(+) = 2,5-diamino-6-(1-D-ribosylamino)pyrimidin-4(3H)-one 5'-phosphate + NADPH + H(+). The catalysed reaction is 2,5-diamino-6-(1-D-ribitylamino)pyrimidin-4(3H)-one 5'-phosphate + NAD(+) = 2,5-diamino-6-(1-D-ribosylamino)pyrimidin-4(3H)-one 5'-phosphate + NADH + H(+). It functions in the pathway cofactor biosynthesis; riboflavin biosynthesis. Functionally, catalyzes an early step in riboflavin biosynthesis, the NADPH-dependent reduction of the ribose side chain of 2,5-diamino-6-ribosylamino-4(3H)-pyrimidinone 5'-phosphate, yielding 2,5-diamino-6-ribitylamino-4(3H)-pyrimidinone 5'-phosphate. The protein is 2,5-diamino-6-ribosylamino-4(3H)-pyrimidinone 5'-phosphate reductase (RIB7) of Kluyveromyces lactis (strain ATCC 8585 / CBS 2359 / DSM 70799 / NBRC 1267 / NRRL Y-1140 / WM37) (Yeast).